Here is a 128-residue protein sequence, read N- to C-terminus: Large ribosomal subunit protein bL17 (128 aa).

The protein belongs to the bacterial ribosomal protein bL17 family. Part of the 50S ribosomal subunit. Contacts protein L32.

The polypeptide is Large ribosomal subunit protein bL17 (Streptococcus suis (strain 98HAH33)).